The sequence spans 248 residues: MSRMPRYKLTIEYDGAPFCGWQLQPALPSVQGALEAAALATCGEAVRVHGAGRTDAGVHALGQVAHVDIPKPFRADKLRDALNAHLRPNPVAVLAAEIVPDTFEARFSAVRRHYRYRIANRRSNLALDLGKVWRVPKPLDTDAMHRAAQVLIGKHNFTTFRDTECQAASPEKTLDVLDVIRDGDAVDIITNARSYLHSQVRSMVGSLVWVGEGRWTADDLAAALAARRRSACGPVAPPEGLYLMQVDY.

Aspartate 55 acts as the Nucleophile in catalysis. Substrate is bound at residue tyrosine 114.

Belongs to the tRNA pseudouridine synthase TruA family. As to quaternary structure, homodimer.

The catalysed reaction is uridine(38/39/40) in tRNA = pseudouridine(38/39/40) in tRNA. Formation of pseudouridine at positions 38, 39 and 40 in the anticodon stem and loop of transfer RNAs. The chain is tRNA pseudouridine synthase A from Rhodopseudomonas palustris (strain ATCC BAA-98 / CGA009).